A 983-amino-acid polypeptide reads, in one-letter code: Alanine--tRNA ligase, mitochondrial (983 aa).

Residues 1-24 (MTSTTGLRNLTLSFKKQLTTSTRT) constitute a mitochondrion transit peptide. Position 504 is a phosphoserine (S504). The Zn(2+) site is built by H625, H629, C744, and H748. A Phosphoserine modification is found at S975.

It belongs to the class-II aminoacyl-tRNA synthetase family. In terms of assembly, monomer. The cofactor is Zn(2+).

Its subcellular location is the cytoplasm. The protein resides in the mitochondrion. The enzyme catalyses tRNA(Ala) + L-alanine + ATP = L-alanyl-tRNA(Ala) + AMP + diphosphate. Its function is as follows. Catalyzes the attachment of alanine to tRNA(Ala) in a two-step reaction: alanine is first activated by ATP to form Ala-AMP and then transferred to the acceptor end of tRNA(Ala). Also edits incorrectly charged tRNA(Ala) via its editing domain. This Saccharomyces cerevisiae (strain ATCC 204508 / S288c) (Baker's yeast) protein is Alanine--tRNA ligase, mitochondrial.